Reading from the N-terminus, the 134-residue chain is MIENLKTNYTGTGHRKQAIARVYLTPGSGLIEVNGIKGELYFQYSPNYIRLSKSPLTTLGLENKYNIYVNAHGGGLTGQVEAIRLGLARALCKLNPENRTALKFEGYLTRDSRITERKKYGLKKARKAPQFSKR.

It belongs to the universal ribosomal protein uS9 family.

The protein localises to the plastid. Its subcellular location is the chloroplast. The sequence is that of Small ribosomal subunit protein uS9c (rps9) from Guillardia theta (Cryptophyte).